We begin with the raw amino-acid sequence, 25 residues long: Histone H1.1 (25 aa).

The H15 domain occupies 1–25; it reads MVSEAIAALKEREGSSEFAIGKKKE. Residues 1–25 form a disordered region; that stretch reads MVSEAIAALKEREGSSEFAIGKKKE. Residues 9 to 25 are compositionally biased toward basic and acidic residues; sequence LKEREGSSEFAIGKKKE.

It localises to the nucleus. Its subcellular location is the chromosome. Its function is as follows. Histones H1 are necessary for the condensation of nucleosome chains into higher-order structures. The chain is Histone H1.1 from Triticum aestivum (Wheat).